Reading from the N-terminus, the 214-residue chain is Putative 3-methyladenine DNA glycosylase (214 aa).

It belongs to the DNA glycosylase MPG family.

The polypeptide is Putative 3-methyladenine DNA glycosylase (Mycobacterium leprae (strain Br4923)).